We begin with the raw amino-acid sequence, 692 residues long: Meiotic sister-chromatid recombination protein 6, mitochondrial (692 aa).

The transit peptide at 1–30 (MLSHNALRAFDCSKVIISRRCLTSSTSIYQ) directs the protein to the mitochondrion.

It localises to the mitochondrion. In terms of biological role, may be involved in the control of meiotic sister-chromatid recombination. The sequence is that of Meiotic sister-chromatid recombination protein 6, mitochondrial (MSC6) from Saccharomyces cerevisiae (strain ATCC 204508 / S288c) (Baker's yeast).